Consider the following 325-residue polypeptide: 4-hydroxy-3-methylbut-2-enyl diphosphate reductase (325 aa).

[4Fe-4S] cluster is bound at residue Cys25. 2 residues coordinate (2E)-4-hydroxy-3-methylbut-2-enyl diphosphate: His54 and His87. Dimethylallyl diphosphate-binding residues include His54 and His87. The isopentenyl diphosphate site is built by His54 and His87. [4Fe-4S] cluster is bound at residue Cys109. His137 is a (2E)-4-hydroxy-3-methylbut-2-enyl diphosphate binding site. His137 is a dimethylallyl diphosphate binding site. His137 contributes to the isopentenyl diphosphate binding site. Glu139 functions as the Proton donor in the catalytic mechanism. Residue Thr179 coordinates (2E)-4-hydroxy-3-methylbut-2-enyl diphosphate. Residue Cys209 participates in [4Fe-4S] cluster binding. The (2E)-4-hydroxy-3-methylbut-2-enyl diphosphate site is built by Ser237, Ser238, Asn239, and Ser282. Dimethylallyl diphosphate contacts are provided by Ser237, Ser238, Asn239, and Ser282. Positions 237, 238, 239, and 282 each coordinate isopentenyl diphosphate.

Belongs to the IspH family. [4Fe-4S] cluster serves as cofactor.

It carries out the reaction isopentenyl diphosphate + 2 oxidized [2Fe-2S]-[ferredoxin] + H2O = (2E)-4-hydroxy-3-methylbut-2-enyl diphosphate + 2 reduced [2Fe-2S]-[ferredoxin] + 2 H(+). It catalyses the reaction dimethylallyl diphosphate + 2 oxidized [2Fe-2S]-[ferredoxin] + H2O = (2E)-4-hydroxy-3-methylbut-2-enyl diphosphate + 2 reduced [2Fe-2S]-[ferredoxin] + 2 H(+). It participates in isoprenoid biosynthesis; dimethylallyl diphosphate biosynthesis; dimethylallyl diphosphate from (2E)-4-hydroxy-3-methylbutenyl diphosphate: step 1/1. It functions in the pathway isoprenoid biosynthesis; isopentenyl diphosphate biosynthesis via DXP pathway; isopentenyl diphosphate from 1-deoxy-D-xylulose 5-phosphate: step 6/6. Functionally, catalyzes the conversion of 1-hydroxy-2-methyl-2-(E)-butenyl 4-diphosphate (HMBPP) into a mixture of isopentenyl diphosphate (IPP) and dimethylallyl diphosphate (DMAPP). Acts in the terminal step of the DOXP/MEP pathway for isoprenoid precursor biosynthesis. The protein is 4-hydroxy-3-methylbut-2-enyl diphosphate reductase of Corynebacterium glutamicum (strain ATCC 13032 / DSM 20300 / JCM 1318 / BCRC 11384 / CCUG 27702 / LMG 3730 / NBRC 12168 / NCIMB 10025 / NRRL B-2784 / 534).